The primary structure comprises 308 residues: tRNA pseudouridine synthase B (308 aa).

The active-site Nucleophile is Asp-51.

The protein belongs to the pseudouridine synthase TruB family. Type 1 subfamily.

The catalysed reaction is uridine(55) in tRNA = pseudouridine(55) in tRNA. Responsible for synthesis of pseudouridine from uracil-55 in the psi GC loop of transfer RNAs. This is tRNA pseudouridine synthase B from Aromatoleum aromaticum (strain DSM 19018 / LMG 30748 / EbN1) (Azoarcus sp. (strain EbN1)).